The primary structure comprises 599 residues: Elongation factor 4 (599 aa).

Positions 2-184 (NHIRNFSIIA…RLVRDIPAPE (183 aa)) constitute a tr-type G domain. GTP-binding positions include 14–19 (DHGKST) and 131–134 (NKID).

Belongs to the TRAFAC class translation factor GTPase superfamily. Classic translation factor GTPase family. LepA subfamily.

The protein resides in the cell inner membrane. The catalysed reaction is GTP + H2O = GDP + phosphate + H(+). Required for accurate and efficient protein synthesis under certain stress conditions. May act as a fidelity factor of the translation reaction, by catalyzing a one-codon backward translocation of tRNAs on improperly translocated ribosomes. Back-translocation proceeds from a post-translocation (POST) complex to a pre-translocation (PRE) complex, thus giving elongation factor G a second chance to translocate the tRNAs correctly. Binds to ribosomes in a GTP-dependent manner. This is Elongation factor 4 from Yersinia pestis (strain Pestoides F).